Reading from the N-terminus, the 461-residue chain is Nicotianamine aminotransferase A (461 aa).

Residues 1 to 29 (MVHQSNGHGEAAAAAANGKSNGHAAAANG) form a disordered region. Residues 11–29 (AAAAAANGKSNGHAAAANG) are compositionally biased toward low complexity. The residue at position 289 (Lys-289) is an N6-(pyridoxal phosphate)lysine.

This sequence belongs to the class-I pyridoxal-phosphate-dependent aminotransferase family. Pyridoxal 5'-phosphate serves as cofactor. As to expression, expressed in roots, but not in leaves.

The catalysed reaction is nicotianamine + 2-oxoglutarate = 3''-deamino-3''-oxonicotianamine + L-glutamate. Functionally, involved in biosynthesis of mugineic acid family phytosiderophores. The polypeptide is Nicotianamine aminotransferase A (Hordeum vulgare (Barley)).